The sequence spans 529 residues: uncharacterized protein (529 aa).

Residues 157–410 (DFPHIICEIE…FKNRVRENID (254 aa)) enclose the Radical SAM core domain. [4Fe-4S] cluster-binding residues include Cys-171, Cys-176, and Cys-179.

Requires [4Fe-4S] cluster as cofactor.

This is an uncharacterized protein from Archaeoglobus fulgidus (strain ATCC 49558 / DSM 4304 / JCM 9628 / NBRC 100126 / VC-16).